The chain runs to 172 residues: Small ribosomal subunit protein uS5 (172 aa).

In terms of domain architecture, S5 DRBM spans 16–79 (LKEKLVHINR…EDGKKNVIKV (64 aa)).

This sequence belongs to the universal ribosomal protein uS5 family. Part of the 30S ribosomal subunit. Contacts proteins S4 and S8.

Functionally, with S4 and S12 plays an important role in translational accuracy. Its function is as follows. Located at the back of the 30S subunit body where it stabilizes the conformation of the head with respect to the body. The sequence is that of Small ribosomal subunit protein uS5 from Chlorobium phaeobacteroides (strain DSM 266 / SMG 266 / 2430).